Consider the following 291-residue polypeptide: Kynurenine formamidase (291 aa).

Positions 33–37 (HGGAW) match the HGGXW motif. S107 (nucleophile) is an active-site residue. Residues D242 and H280 contribute to the active site.

It belongs to the kynurenine formamidase family. As to quaternary structure, homodimer.

The enzyme catalyses N-formyl-L-kynurenine + H2O = L-kynurenine + formate + H(+). Its pathway is amino-acid degradation; L-tryptophan degradation via kynurenine pathway; L-kynurenine from L-tryptophan: step 2/2. Its function is as follows. Catalyzes the hydrolysis of N-formyl-L-kynurenine to L-kynurenine, the second step in the kynurenine pathway of tryptophan degradation. Kynurenine may be further oxidized to nicotinic acid, NAD(H) and NADP(H). Required for elimination of toxic metabolites. This is Kynurenine formamidase from Debaryomyces hansenii (strain ATCC 36239 / CBS 767 / BCRC 21394 / JCM 1990 / NBRC 0083 / IGC 2968) (Yeast).